Reading from the N-terminus, the 260-residue chain is Indole-3-glycerol phosphate synthase (260 aa).

Belongs to the TrpC family.

It carries out the reaction 1-(2-carboxyphenylamino)-1-deoxy-D-ribulose 5-phosphate + H(+) = (1S,2R)-1-C-(indol-3-yl)glycerol 3-phosphate + CO2 + H2O. Its pathway is amino-acid biosynthesis; L-tryptophan biosynthesis; L-tryptophan from chorismate: step 4/5. This is Indole-3-glycerol phosphate synthase from Nocardioides sp. (strain ATCC BAA-499 / JS614).